Reading from the N-terminus, the 274-residue chain is Lectin-like protein (274 aa).

The N-terminal stretch at 1–19 is a signal peptide; that stretch reads MKIHKLCFLALLLAHTTSA. The segment at 28 to 268 is legume-lectin like; the sequence is TSELVFLGDA…RHDIWSWTFQ (241 aa). A disordered region spans residues 62 to 81; the sequence is SHGQSLWSTPVPFKPSSNSS. An N-linked (GlcNAc...) asparagine glycan is attached at Asn129. The residue at position 238 (Ser238) is a Phosphoserine.

This sequence belongs to the leguminous lectin family. As to expression, expressed in seedlings and leaves of adult plants.

It localises to the secreted. It is found in the extracellular space. Its subcellular location is the apoplast. The protein localises to the cell membrane. Functionally, plays a positive role in the effector-triggered immunity (ETI) response. Involved in salicylic acid (SA)-mediated processes occurring in ETI response, but is not involved in the autophagy process. Promotes systemic rather than local immunity. Essential for systemic acquired resistance (SAR), but not necessary for immune signaling downstream of SA. May act in parallel with SA. The protein is Lectin-like protein of Arabidopsis thaliana (Mouse-ear cress).